Here is a 981-residue protein sequence, read N- to C-terminus: uncharacterized protein (981 aa).

Disordered regions lie at residues 65 to 133 (NIDN…SNNS), 149 to 463 (SSNS…NKIE), 491 to 580 (SNNI…DSPL), 592 to 834 (EQTN…LNQV), and 861 to 891 (VQND…NDGN). The segment covering 75 to 88 (SSDDDDDDDDDDDY) has biased composition (acidic residues). Low complexity-rich tracts occupy residues 89–133 (NNNN…SNNS), 149–158 (SSNSINNNDN), and 170–181 (SAKTTSSLTSSK). The span at 182-195 (RSLDSRNRNRDRSY) shows a compositional bias: basic and acidic residues. The segment covering 196-206 (TRSRSRSRSRS) has biased composition (basic residues). The segment covering 207–227 (YSRGFSSLSRSRSRSRSISSR) has biased composition (low complexity). Positions 228-269 (SRSRSRSRRSRSRSSRSRSRSRSKSKSKSRRSRSRSRSRRSR) are enriched in basic residues. Basic and acidic residues predominate over residues 270 to 292 (SRSDSRSRSDSRGRSRSRSDSRK). Over residues 314–358 (SSKRHQNSRKRNRSYSRSRTRSWSRSRTRSRSRRRYGGRTFRSPR) the composition is skewed to basic residues. The segment covering 359-452 (RSRDDSRDRG…SQSPHNEKNK (94 aa)) has biased composition (basic and acidic residues). The span at 491-553 (SNNINNNNIK…SHNNTNGNVN (63 aa)) shows a compositional bias: low complexity. 2 stretches are compositionally biased toward polar residues: residues 554–576 (GVSK…STDL) and 605–622 (ESNN…SSTE). A compositionally biased stretch (basic and acidic residues) spans 623–634 (NENKNRENEKNN). Low complexity-rich tracts occupy residues 635-820 (SENS…NNNS) and 867-891 (SSPI…NDGN).

This is an uncharacterized protein from Dictyostelium discoideum (Social amoeba).